A 199-amino-acid chain; its full sequence is Putative 3-methyladenine DNA glycosylase (199 aa).

The protein belongs to the DNA glycosylase MPG family.

The sequence is that of Putative 3-methyladenine DNA glycosylase from Rhizobium etli (strain ATCC 51251 / DSM 11541 / JCM 21823 / NBRC 15573 / CFN 42).